The sequence spans 335 residues: GTPase Obg (335 aa).

One can recognise an Obg domain in the interval 1-158 (MFVDQITLEL…RLVELELKLI (158 aa)). The OBG-type G domain maps to 159-334 (ADIGLVGFPN…LYDLFKSKLS (176 aa)). Residues 165-172 (GFPNAGKS), 190-194 (FTTLH), 215-218 (DIPG), 285-288 (NKID), and 315-317 (SGL) contribute to the GTP site. Mg(2+) contacts are provided by Ser172 and Thr192.

The protein belongs to the TRAFAC class OBG-HflX-like GTPase superfamily. OBG GTPase family. Monomer. Requires Mg(2+) as cofactor.

The protein resides in the cytoplasm. Functionally, an essential GTPase which binds GTP, GDP and possibly (p)ppGpp with moderate affinity, with high nucleotide exchange rates and a fairly low GTP hydrolysis rate. Plays a role in control of the cell cycle, stress response, ribosome biogenesis and in those bacteria that undergo differentiation, in morphogenesis control. This chain is GTPase Obg, found in Chlamydia trachomatis serovar L2 (strain ATCC VR-902B / DSM 19102 / 434/Bu).